The chain runs to 720 residues: MAEEEEVEEGRSSSSAILDLPEPLLLHILSFLTDVRSRHRAALACGRMRAAERATRSELSLRGDPRSPGFLFLSHAFRFPALEHLDLSLVSPWGHPLLSSVPPCGGGGGGAPSASSSSGMNVYHPEAISEQNAFIAARLAGCFPAVTSLAVYCRDPTTLANLTPHWQASLRRVKLVRWHQRPPTLPDGADLEPLLETCAALRELDLSEFYCWTEDVVRALTTHPSATAALTHLDLGLAAATDGFKSSELGPIAASCPNLRKLVAPCLFNPRFSDCVGDDALLSLATSCPRLTVLRLSEPFEAAANIQREEAAITVAGLVAFFAALPALEDFTMDLQHNVLEAAPAMEALARRCPRIKFLTLGSFQGLCKASWLHLDGVAVCGGLESLYMKNCQDLTDASLAAIGRGCRRLAKFGIHGCDLVTSAGIRRLAFTLRPTLKEVTVLHCRLLHTAECLTALSPIRDRIESLEINCVWNTTEQPCSVANGTTTECDPEDDELGEVYESAAKKCRYMEFDDLGSWEMLRSLSLWFSAGQLLSPLISAGLDSCPVLEEISIKVEGDCRTCPRPAPRTIFGLSDLAGFPVLAKMKLDLSEAVGYALTAPTGQMDLSLWERFYLHGIESLQTLYELDYWPPQDKDVHHRSLTLPAVGLIQRCVGLRKLFIHGTTHEHFMTFFLSIPNLRDMQLREDYYPAPENDLMFTEMRAESWLRFEVQLNSRQIDD.

One can recognise an F-box domain in the interval 14–60 (SSAILDLPEPLLLHILSFLTDVRSRHRAALACGRMRAAERATRSELS). LRR repeat units lie at residues 71–134 (LFLS…QNAF), 135–158 (IAARLAGCFPAVTSLAVYCRDPTT), 159–189 (LANLTPHWQASLRRVKLVRWHQRPPTLPDGA), 190–218 (DLEPLLETCAALRELDLSEFYCWTEDVVR), 219–247 (ALTTHPSATAALTHLDLGLAAATDGFKSS), 248–279 (ELGPIAASCPNLRKLVAPCLFNPRFSDCVGDD), 280–316 (ALLSLATSCPRLTVLRLSEPFEAAANIQREEAAITVA), 317–344 (GLVAFFAALPALEDFTMDLQHNVLEAAP), 345–372 (AMEALARRCPRIKFLTLGSFQGLCKASW), 373–398 (LHLDGVAVCGGLESLYMKNCQDLTDA), 399–435 (SLAAIGRGCRRLAKFGIHGCDLVTSAGIRRLAFTLRP), 436–452 (TLKEVTVLHCRLLHTAE), 453–510 (CLTA…KCRY), 511–537 (MEFDDLGSWEMLRSLSLWFSAGQLLSP), 538–571 (LISAGLDSCPVLEEISIKVEGDCRTCPRPAPRTI), 572–606 (FGLSDLAGFPVLAKMKLDLSEAVGYALTAPTGQMD), 607–644 (LSLWERFYLHGIESLQTLYELDYWPPQDKDVHHRSLTL), and 645–720 (PAVG…QIDD).

As to quaternary structure, associates to a SCF (SKP1-CUL1-F-box protein) E3 ubiquitin-protein ligase complex. Interacts with D14 in a strigolactone-dependent manner. Interacts with SKP1, SKP5 and SKP20. As to expression, expressed in leaves. Expressed in roots, culms, leaf blades, leaf sheaths, shoot bases and panicles.

It localises to the nucleus. Involved in strigolactone (SL) signaling. Required for responses to SLs and the establishment of arbuscular mycorrhiza symbiosis in rice. Strigolactone-dependent association of D3 with D14 and D53 (a repressor of SL signaling) triggers D53 ubiquitination and degradation. Controls tillering by suppressing axillary bud activity. Tiller is a specialized grain-bearing branch that is formed on the unelongated basal internode and grows independently of the mother stem (culm) by means of its own adventitious roots. In Oryza sativa subsp. japonica (Rice), this protein is F-box/LRR-repeat MAX2 homolog.